Here is a 156-residue protein sequence, read N- to C-terminus: Transcription elongation factor GreA (156 aa).

Positions 46–67 (AEYHAAREKQSFIEGRIKELEA) form a coiled coil.

This sequence belongs to the GreA/GreB family.

In terms of biological role, necessary for efficient RNA polymerase transcription elongation past template-encoded arresting sites. The arresting sites in DNA have the property of trapping a certain fraction of elongating RNA polymerases that pass through, resulting in locked ternary complexes. Cleavage of the nascent transcript by cleavage factors such as GreA or GreB allows the resumption of elongation from the new 3'terminus. GreA releases sequences of 2 to 3 nucleotides. The sequence is that of Transcription elongation factor GreA from Cereibacter sphaeroides (strain ATCC 17029 / ATH 2.4.9) (Rhodobacter sphaeroides).